The primary structure comprises 475 residues: Ribulose bisphosphate carboxylase large chain (475 aa).

Positions 1 to 2 are excised as a propeptide; that stretch reads MS. Proline 3 is modified (N-acetylproline). At lysine 14 the chain carries N6,N6,N6-trimethyllysine. 2 residues coordinate substrate: asparagine 123 and threonine 173. The active-site Proton acceptor is lysine 175. Substrate is bound at residue lysine 177. Positions 201, 203, and 204 each coordinate Mg(2+). At lysine 201 the chain carries N6-carboxylysine. Residue histidine 294 is the Proton acceptor of the active site. Residues arginine 295, histidine 327, and serine 379 each contribute to the substrate site.

The protein belongs to the RuBisCO large chain family. Type I subfamily. As to quaternary structure, heterohexadecamer of 8 large chains and 8 small chains; disulfide-linked. The disulfide link is formed within the large subunit homodimers. The cofactor is Mg(2+). The disulfide bond which can form in the large chain dimeric partners within the hexadecamer appears to be associated with oxidative stress and protein turnover.

The protein resides in the plastid. It localises to the chloroplast. The enzyme catalyses 2 (2R)-3-phosphoglycerate + 2 H(+) = D-ribulose 1,5-bisphosphate + CO2 + H2O. It carries out the reaction D-ribulose 1,5-bisphosphate + O2 = 2-phosphoglycolate + (2R)-3-phosphoglycerate + 2 H(+). Functionally, ruBisCO catalyzes two reactions: the carboxylation of D-ribulose 1,5-bisphosphate, the primary event in carbon dioxide fixation, as well as the oxidative fragmentation of the pentose substrate in the photorespiration process. Both reactions occur simultaneously and in competition at the same active site. In Pinus krempfii (Krempf's pine), this protein is Ribulose bisphosphate carboxylase large chain.